Consider the following 395-residue polypeptide: tRNA-specific 2-thiouridylase MnmA (395 aa).

ATP is bound by residues 7-14 (GLSGGVDS) and methionine 33. An interaction with target base in tRNA region spans residues 95–97 (NPD). The active-site Nucleophile is the cysteine 100. Cysteine 100 and cysteine 200 are disulfide-bonded. Glycine 124 is a binding site for ATP. The interval 150–152 (KDQ) is interaction with tRNA. Cysteine 200 (cysteine persulfide intermediate) is an active-site residue. The segment at 346–347 (RY) is interaction with tRNA.

It belongs to the MnmA/TRMU family.

It localises to the cytoplasm. It carries out the reaction S-sulfanyl-L-cysteinyl-[protein] + uridine(34) in tRNA + AH2 + ATP = 2-thiouridine(34) in tRNA + L-cysteinyl-[protein] + A + AMP + diphosphate + H(+). Functionally, catalyzes the 2-thiolation of uridine at the wobble position (U34) of tRNA, leading to the formation of s(2)U34. In Flavobacterium johnsoniae (strain ATCC 17061 / DSM 2064 / JCM 8514 / BCRC 14874 / CCUG 350202 / NBRC 14942 / NCIMB 11054 / UW101) (Cytophaga johnsonae), this protein is tRNA-specific 2-thiouridylase MnmA.